Consider the following 479-residue polypeptide: ATP synthase subunit beta (479 aa).

153–160 contributes to the ATP binding site; that stretch reads GGAGVGKT.

This sequence belongs to the ATPase alpha/beta chains family. In terms of assembly, F-type ATPases have 2 components, CF(1) - the catalytic core - and CF(0) - the membrane proton channel. CF(1) has five subunits: alpha(3), beta(3), gamma(1), delta(1), epsilon(1). CF(0) has three main subunits: a(1), b(2) and c(9-12). The alpha and beta chains form an alternating ring which encloses part of the gamma chain. CF(1) is attached to CF(0) by a central stalk formed by the gamma and epsilon chains, while a peripheral stalk is formed by the delta and b chains.

It is found in the cell membrane. The enzyme catalyses ATP + H2O + 4 H(+)(in) = ADP + phosphate + 5 H(+)(out). In terms of biological role, produces ATP from ADP in the presence of a proton gradient across the membrane. The catalytic sites are hosted primarily by the beta subunits. The sequence is that of ATP synthase subunit beta from Lactobacillus delbrueckii subsp. bulgaricus (strain ATCC 11842 / DSM 20081 / BCRC 10696 / JCM 1002 / NBRC 13953 / NCIMB 11778 / NCTC 12712 / WDCM 00102 / Lb 14).